The following is a 412-amino-acid chain: P-selectin glycoprotein ligand 1 (412 aa).

An N-terminal signal peptide occupies residues 1–17 (MPLQLLLLLILLGPGNS). The propeptide occupies 18–41 (LQLWDTWADEAEKALGPLLARDRR). At 18–320 (LQLWDTWADE…APDHISVKQC (303 aa)) the chain is on the extracellular side. Residue Gln42 is modified to Pyrrolidone carboxylic acid. 3 positions are modified to sulfotyrosine: Tyr46, Tyr48, and Tyr51. A disordered region spans residues 56–95 (ETEPPEMLRNSTDTTPLTGPGTPESTTVEPAARRSTGLDA). O-linked (GalNAc...) threonine glycosylation is present at Thr57. The N-linked (GlcNAc...) asparagine glycan is linked to Asn65. Positions 66 to 82 (STDTTPLTGPGTPESTT) are enriched in low complexity. Asn111 is a glycosylation site (N-linked (GlcNAc...) asparagine). Repeat copies occupy residues 122–131 (QTTQPAATEA), 132–141 (QTTQPVPTEA), 142–151 (QTTPLAATEA), 162–171 (QTTPLAATEA), 182–191 (QTTQPTGLEA), 192–201 (QTTAPAAMEA), 202–211 (QTTAPAAMEA), 212–221 (QTTPPAAMEA), 222–231 (QTTQTTAMEA), 232–241 (QTTAPEATEA), 242–251 (QTTQPTATEA), and 252–261 (QTTPLAAMEA). Residues 122–261 (QTTQPAATEA…QTTPLAAMEA (140 aa)) form a 12 X 10 AA tandem repeats region. Disordered regions lie at residues 125-146 (QPAA…TTPL) and 166-252 (LAAT…TEAQ). An N-linked (GlcNAc...) asparagine glycan is attached at Asn302. A helical membrane pass occupies residues 321-341 (LLAILILALVATIFFVCTVVL). Residues 342–412 (AVRLSRKGHM…DDLTLHSFLP (71 aa)) are Cytoplasmic-facing. A disordered region spans residues 374 to 412 (EGPSATANGGLSKAKSPGLTPEPREDREGDDLTLHSFLP). The segment covering 395–406 (EPREDREGDDLT) has biased composition (basic and acidic residues). Thr406 bears the Phosphothreonine mark. Phosphoserine is present on Ser409.

Homodimer; disulfide-linked. Interaction with P-, E- and L-selectins, through their lectin/EGF domains, is required for promoting recruitment and rolling of leukocytes. These interactions require sialyl Lewis X glycan modification but there is a differing dependence for tyrosine sulfations. Sulfation on Tyr-51 of PSGL1 is most important for high affinity L-selectin/SELL binding while P-selectin/SELP requires sulfation on Tyr-48. E-selectin/SELE binds with much lower affinity and requires the sLe(x) epitope, but apparently not tyrosine sulfation. Dimerization appears not to be required for P-selectin/SELP binding. Interacts with SNX20. Interacts with MSN and SYK; mediates the activation of SYK by SELPLG. Interacts with HAVCR1. As to quaternary structure, (Microbial infection) Interacts with enterovirus 71 capsid proteins. In terms of assembly, (Microbial infection) Interacts with Staphylococcus aureus proteins SSL5 and SSL11; these interactions prevent SELPLG-mediated neutrophil rolling. In terms of processing, displays complex, core-2, sialylated and fucosylated O-linked oligosaccharides, at least some of which appear to contain poly-N-acetyllactosamine with varying degrees of substitution. Mainly disialylated or neutral forms of the core-2 tetrasaccharide, Galbeta1--&gt;4GlcNAcbeta1--&gt;6(Galbeta1--&gt;3)GalNAcOH. The GlcN:GalN ratio is approximately 2:1 and the Man:Fuc ratio 3:5. Contains about 14% fucose with alpha-1,3 linkage present in two forms: One species is a disialylated, monofucosylated glycan, and the other, a monosialylated, trifucosylated glycan with a polylactosamine backbone. The fucosylated forms carry the Lewis antigen and are important for interaction with selectins and for functioning in leukocyte rolling. The modification containing the sialyl Lewis X glycan is on Thr-57. No sulfated O-glycans. Some N-glycosylation. Sulfation, in conjunction with the SLe(x)-containing glycan, is necessary for P- and L-selectin binding. High affinity P-selectin binding has a preferred requirement for the isomer sulfated on both Tyr-48 and Tyr-51, whereas L-selectin binding requires predominantly sulfation on Tyr-51 with sulfation on Tyr-48 playing only a minor role. These sulfations play an important role in L- and P-selectin-mediated neutrophil recruitment, and leukocyte rolling. Expressed on neutrophils, monocytes and most lymphocytes.

The protein localises to the membrane. Functionally, a SLe(x)-type proteoglycan, which through high affinity, calcium-dependent interactions with E-, P- and L-selectins, mediates rapid rolling of leukocytes over vascular surfaces during the initial steps in inflammation. Critical for the initial leukocyte capture. Its function is as follows. (Microbial infection) Acts as a receptor for enterovirus 71. This chain is P-selectin glycoprotein ligand 1 (SELPLG), found in Homo sapiens (Human).